Here is a 405-residue protein sequence, read N- to C-terminus: Neisseria adhesin A (405 aa).

The signal sequence occupies residues 1–23; sequence MKHFPSKVLTTAILATFCSGALA. A head domain region spans residues 24-87; sequence ATNDDDVKKA…ADDFKGLGLK (64 aa). 2 coiled-coil regions span residues 87–170 and 181–329; these read KKVV…KLEA and AFND…LRKE. The coiled stalk domain stretch occupies residues 88-350; sequence KVVTNLTKTV…SGLFQPYNVG (263 aa). The segment at 312–350 is outer membrane translocation of the passenger domain; sequence HDTRLNGLDKTVSDLRKETRQGLAEQAALSGLFQPYNVG. 4 consecutive transmembrane segments (beta stranded) span residues 350–360, 364–375, 382–388, and 394–405; these read GRFNVTAAVGG, ESAVAIGTGFRF, KAGVAVG, and SAAYHVGVNYEW. The segment at 351 to 405 is translocator domain; that stretch reads RFNVTAAVGGYKSESAVAIGTGFRFTENFAAKAGVAVGTSSGSSAAYHVGVNYEW.

The protein belongs to the autotransporter-2 (AT-2) (TC 1.B.40) family. The non-membrane anchored protein (residues 24-350) probably forms a homotrimer; it is assumed the mature protein forms trimers in situ. The mature protein without the membrane-targeting segment (residues 24-350) binds to human heat shock 90 beta protein (HSP90AB1) both in vitro and when incubated with human monocytes. A subsequent paper showed binding of the same fragment in epithelial cells to both HSP90AA1 and HSP90AB1; in vitro the interaction is stabilized by ADP and the Hsp90 inhibitor 17-AAG (17-N-allylamino-17-demethoxygeldanamycin), in vitro and in vivo both interactions are inhibited by ATP. Binds human oxidized low-density lipoprotein receptor 1 (LOX-1, OLR1) in protein microarrays, in solution and when LOX-1 is expressed on the cell surface. Binds via the head and the beginning of the coiled stalk (residues 24-170); binding can be abrogated by monoclonal antibodies against those specific regions of NadA. Other potential binding partners were identified but not characterized in the same study. Forms high molecular weight oligomers in whole cell extracts that are not disrupted by boiling in SDS buffer.

It is found in the cell outer membrane. Its subcellular location is the cell surface. Functionally, adheres to and induces bacterial uptake by human epithelial cells in a microfilament-dependent process. Binding is reduced by pronase treatment, suggesting there is a protein receptor on the human cells. Possible human protein receptors include integrin beta-1 (ITGB1) and oxidized low-density lipoprotein receptor 1 (OLR1). Binds to extracellular human Hsp90 (preferentially the beta isoform, HSP90AB1) on monocytes, binding stimulates monocytes in a TLR4-dependent fashion, polymixin B, which binds NadA, blocks the activation. Hsp90 is probably not the first receptor on human monocytes. Non-membrane anchored protein (residues 24-350) is internalized into human epithelial cells by hijacking the endosome recycling pathway and may be recycled back to the cell surface, which might aid transcellular trafficking of the bacteria. A bacterial cell surface protein; antisera against this protein induce complement-mediated killing of this and other strains. This is Neisseria adhesin A from Neisseria meningitidis serogroup B.